Here is a 766-residue protein sequence, read N- to C-terminus: MLSNRAFGETIEDYEVQHLLGKGGFAIVYKARCLHTHQDVAIKMIDKKLIQGTGLTNRVRQEVEIHSRLKHPSVLQLYTFFQDANYVYLVLELAHNGELHRYMNHIARPFTETEAASILKQVVAGLLYLHSHNIMHRDISLSNLLLSKEMHVKIADFGLATQLKRPDERHMTMCGTPNYISPEVVSRSSHGLPADVWSVGCMLYTLLVGRPPFETDAVQSTLNKVVMSEYIMPAHLSYEAQDLINKLLKKLPHERITLEAVLCHPFMLKCSNGGHSTPGALNMFSQSMESADSGIITFASSESRNSQQIRSVENSGPQQMLPQIQEEFKHHKLTYEQPGLFRQTSTGLAEPNWPGAAKASAFHMEIGMVPTSKPAPVKEDRISVPPLNTKRLLSTRYKTKNAIMSILRNGEVVLEFLKFRPTYNEDRIIDICRISDDGQRIIIYQPDPGRGLPVREQPPDLQIPSGDCVYNYENLPSKHWKKYIYGARFVGLVKSKTPKVTYFSTLGKCQLMETMTDFEIRFYSGAKLLKTPTEGVKVYDRNGMFLSDHTCSESRSLIEHGNECFTHCININNALEVAQTKDNSCFPVTIGRRPVTDVQPAQRLDGLRDTTNIAFSTPKSNQGSINFSVSTISSTRNTTDFGNNCSRLNMLASHQNIPIKRINVPDVGIATELSHGVVQVQFYDGSVVSVIPSMQGGGITYTQPNGTSTHFGKDDDLPFPVRDRVGQIPNIQIKLKTAPLLESGRKIDYNNATPKTTTPSYNRMLL.

Residues 14-267 (YEVQHLLGKG…LEAVLCHPFM (254 aa)) form the Protein kinase domain. ATP contacts are provided by residues 20 to 28 (LGKGGFAIV) and Lys-43. The Proton acceptor role is filled by Asp-138. In terms of domain architecture, Cryptic POLO box 1 (CPB1) spans 379-496 (EDRISVPPLN…ARFVGLVKSK (118 aa)). The Cryptic POLO box 2 (CPB2) domain maps to 497–600 (TPKVTYFSTL…GRRPVTDVQP (104 aa)). The POLO box domain maps to 658–737 (PIKRINVPDV…IPNIQIKLKT (80 aa)).

It belongs to the protein kinase superfamily. Ser/Thr protein kinase family. CDC5/Polo subfamily. As to quaternary structure, homodimer. Ubiquitinated by the SCF(Slimb) ubiquitin ligase complex; leading to its degradation by the proteasome during interphase and regulating centriole number and ensuring the block to centriole reduplication.

The protein localises to the cytoplasm. It is found in the cytoskeleton. It localises to the microtubule organizing center. Its subcellular location is the centrosome. The protein resides in the centriole. It catalyses the reaction L-seryl-[protein] + ATP = O-phospho-L-seryl-[protein] + ADP + H(+). The catalysed reaction is L-threonyl-[protein] + ATP = O-phospho-L-threonyl-[protein] + ADP + H(+). In terms of biological role, serine/threonine-protein kinase that plays a central role in centriole duplication. Able to trigger procentriole formation on the surface of the mother centriole cylinder, using mother centriole as a platform, leading to the recruitment of centriole biogenesis proteins such as sas-6. When overexpressed, it is able to induce centrosome amplification through the simultaneous generation of multiple procentrioles adjoining each parental centriole during S phase. Centrosome amplification following overexpression can initiate tumorigenesis, highlighting the importance of centrosome regulation in cancers. The protein is Serine/threonine-protein kinase PLK4 (SAK) of Drosophila yakuba (Fruit fly).